Reading from the N-terminus, the 159-residue chain is Putative ribosomal RNA large subunit methyltransferase H (159 aa).

Residues Leu76, Gly108, and 127–132 contribute to the S-adenosyl-L-methionine site; that span reads FSKMTF.

The protein belongs to the RNA methyltransferase RlmH family.

The protein resides in the cytoplasm. The enzyme catalyses pseudouridine(1915) in 23S rRNA + S-adenosyl-L-methionine = N(3)-methylpseudouridine(1915) in 23S rRNA + S-adenosyl-L-homocysteine + H(+). Specifically methylates the pseudouridine at position 1915 (m3Psi1915) in 23S rRNA. The chain is Putative ribosomal RNA large subunit methyltransferase H from Methanococcus vannielii (strain ATCC 35089 / DSM 1224 / JCM 13029 / OCM 148 / SB).